The following is a 446-amino-acid chain: Phosphoglucosamine mutase (446 aa).

Ser-101 functions as the Phosphoserine intermediate in the catalytic mechanism. Residues Ser-101, Asp-240, Asp-242, and Asp-244 each contribute to the Mg(2+) site. Phosphoserine is present on Ser-101.

Belongs to the phosphohexose mutase family. It depends on Mg(2+) as a cofactor. In terms of processing, activated by phosphorylation.

The catalysed reaction is alpha-D-glucosamine 1-phosphate = D-glucosamine 6-phosphate. Catalyzes the conversion of glucosamine-6-phosphate to glucosamine-1-phosphate. This Coxiella burnetii (strain RSA 331 / Henzerling II) protein is Phosphoglucosamine mutase.